Here is a 311-residue protein sequence, read N- to C-terminus: Malate dehydrogenase (311 aa).

NAD(+) is bound by residues G7–G13 and D34. Substrate-binding residues include R81 and R87. NAD(+)-binding positions include N94 and I117–N119. Substrate-binding residues include N119 and R153. The active-site Proton acceptor is the H177. Residue M227 coordinates NAD(+).

This sequence belongs to the LDH/MDH superfamily. MDH type 1 family. As to quaternary structure, homodimer.

It catalyses the reaction (S)-malate + NAD(+) = oxaloacetate + NADH + H(+). In terms of biological role, catalyzes the reversible oxidation of malate to oxaloacetate. The protein is Malate dehydrogenase of Aliivibrio fischeri (strain MJ11) (Vibrio fischeri).